The following is a 69-amino-acid chain: U2-agatoxin-Ao1e (69 aa).

A signal peptide spans 1–20; it reads MRAIISVLLISAMVFSIIEA. A propeptide spanning residues 21-34 is cleaved from the precursor; sequence VPLEEGLQLFEAER. Intrachain disulfides connect Cys-37–Cys-53, Cys-44–Cys-58, and Cys-52–Cys-68.

The protein belongs to the neurotoxin 01 (U2-agtx) family. In terms of tissue distribution, expressed by the venom gland.

It is found in the secreted. Functionally, insect active toxin causing rapid but reversible paralysis in crickets. No activity shown in mammals. Does not show effect on mammalian voltage-gated calcium channels. This is U2-agatoxin-Ao1e from Agelena orientalis (Funnel-web spider).